We begin with the raw amino-acid sequence, 43 residues long: NCIDFGGDCDGEKDDCQCCXRNGYCSCYNLFGYLKRGCKXEVG.

Disulfide bonds link cysteine 2–cysteine 19, cysteine 9–cysteine 25, and cysteine 27–cysteine 38.

It belongs to the neurotoxin 04 (omega-agtx) family. 03 (type II/III omega-agtx) subfamily. In terms of tissue distribution, expressed by the venom gland.

The protein resides in the secreted. Omega-agatoxins are antagonists of voltage-gated calcium channels (Cav). The chain is Omega-agatoxin-Aa3c from Agelenopsis aperta (North American funnel-web spider).